Here is a 622-residue protein sequence, read N- to C-terminus: Probable potassium transport system protein Kup 1 (622 aa).

The next 12 membrane-spanning stretches (helical) occupy residues 7–27 (LLVL…TSPL), 50–70 (LISL…VLFL), 96–116 (TAIL…DAMI), 132–152 (VTPA…LLLF), 165–185 (FFGP…FVHI), 210–230 (VGIV…ALYA), 244–264 (WFTV…AFVL), 282–302 (ALLP…QAVI), 334–354 (IYLP…VFLF), 360–380 (LATA…VLSF), 391–411 (TWWA…FLGA), and 416–436 (IHDG…IMWT).

This sequence belongs to the HAK/KUP transporter (TC 2.A.72) family.

Its subcellular location is the cell inner membrane. It catalyses the reaction K(+)(in) + H(+)(in) = K(+)(out) + H(+)(out). Transport of potassium into the cell. Likely operates as a K(+):H(+) symporter. The chain is Probable potassium transport system protein Kup 1 from Rhizobium meliloti (strain 1021) (Ensifer meliloti).